A 107-amino-acid chain; its full sequence is U1-lycotoxin-Ls1o (107 aa).

A signal peptide spans M1–S20. The propeptide occupies E21–R41. Intrachain disulfides connect C44–C59, C51–C68, C58–C86, and C70–C84.

It belongs to the neurotoxin 19 (CSTX) family. 04 (U1-Lctx) subfamily. In terms of tissue distribution, expressed by the venom gland.

The protein localises to the secreted. In Lycosa singoriensis (Wolf spider), this protein is U1-lycotoxin-Ls1o.